Here is a 198-residue protein sequence, read N- to C-terminus: Protein GrpE (198 aa).

This sequence belongs to the GrpE family. In terms of assembly, homodimer.

The protein resides in the cytoplasm. Participates actively in the response to hyperosmotic and heat shock by preventing the aggregation of stress-denatured proteins, in association with DnaK and GrpE. It is the nucleotide exchange factor for DnaK and may function as a thermosensor. Unfolded proteins bind initially to DnaJ; upon interaction with the DnaJ-bound protein, DnaK hydrolyzes its bound ATP, resulting in the formation of a stable complex. GrpE releases ADP from DnaK; ATP binding to DnaK triggers the release of the substrate protein, thus completing the reaction cycle. Several rounds of ATP-dependent interactions between DnaJ, DnaK and GrpE are required for fully efficient folding. The protein is Protein GrpE of Baumannia cicadellinicola subsp. Homalodisca coagulata.